The sequence spans 339 residues: Glycerol-3-phosphate dehydrogenase [NAD(P)+] (339 aa).

NADPH is bound by residues Ser-15, Tyr-16, His-36, and Lys-110. Sn-glycerol 3-phosphate contacts are provided by Lys-110, Gly-139, and Thr-141. Ala-143 contributes to the NADPH binding site. Sn-glycerol 3-phosphate is bound by residues Lys-195, Asp-248, Ser-258, Arg-259, and Asn-260. Catalysis depends on Lys-195, which acts as the Proton acceptor. Position 259 (Arg-259) interacts with NADPH. NADPH-binding residues include Val-283 and Glu-285.

It belongs to the NAD-dependent glycerol-3-phosphate dehydrogenase family.

Its subcellular location is the cytoplasm. It catalyses the reaction sn-glycerol 3-phosphate + NAD(+) = dihydroxyacetone phosphate + NADH + H(+). It carries out the reaction sn-glycerol 3-phosphate + NADP(+) = dihydroxyacetone phosphate + NADPH + H(+). Its pathway is membrane lipid metabolism; glycerophospholipid metabolism. Functionally, catalyzes the reduction of the glycolytic intermediate dihydroxyacetone phosphate (DHAP) to sn-glycerol 3-phosphate (G3P), the key precursor for phospholipid synthesis. The sequence is that of Glycerol-3-phosphate dehydrogenase [NAD(P)+] from Klebsiella pneumoniae subsp. pneumoniae (strain ATCC 700721 / MGH 78578).